The chain runs to 88 residues: LYR motif-containing protein 2 (88 aa).

The transit peptide at 1–19 directs the protein to the mitochondrion; the sequence is MAASRLPPAALTLKQFMRR.

This sequence belongs to the complex I LYR family.

The protein localises to the mitochondrion. In terms of biological role, involved in efficient integration of the N-module into mitochondrial respiratory chain complex I. This is LYR motif-containing protein 2 (Lyrm2) from Mus musculus (Mouse).